Reading from the N-terminus, the 911-residue chain is Androgen receptor (911 aa).

Residues 1–549 (MEVQLGLGRV…PIDYYFPPQK (549 aa)) form a modulating region. Residues 1–578 (MEVQLGLGRV…GSCKVFFKRA (578 aa)) form an interaction with ZNF318 region. 2 disordered regions span residues 35–164 (QNPG…LSLL) and 192–225 (QQQQQEAVSEGSSSGRAREASGAPTSSKDNYLGG). Positions 44–88 (AASAAPPGASLLLQQQQQQQQQQQQQQQQQQQQQQETSPRQQQQQ) are enriched in low complexity. Position 81 is a phosphoserine; by CDK9 (S81). S93 is subject to Phosphoserine. The span at 192-214 (QQQQQEAVSEGSSSGRAREASGA) shows a compositional bias: low complexity. Over residues 215 to 225 (PTSSKDNYLGG) the composition is skewed to polar residues. The residue at position 222 (Y222) is a Phosphotyrosine; by CSK. Position 255 is a phosphoserine (S255). Y266 is subject to Phosphotyrosine; by CSK and TNK2. A phosphotyrosine; by CSK mark is found at Y306, Y345, Y356, and Y361. Position 362 is a phosphotyrosine; by CSK and TNK2 (Y362). A Glycyl lysine isopeptide (Lys-Gly) (interchain with G-Cter in SUMO) cross-link involves residue K385. Residue Y392 is modified to Phosphotyrosine; by CSK. K512 participates in a covalent cross-link: Glycyl lysine isopeptide (Lys-Gly) (interchain with G-Cter in SUMO). Phosphotyrosine; by CSK is present on residues Y526 and Y543. The segment at 543–910 (YYFPPQKTCL…GKVKPIYFHT (368 aa)) is interaction with LPXN. 2 consecutive NR C4-type zinc fingers follow at residues 551–571 (CLICGDEASGCHYGALTCGSC) and 587–611 (CASRNDCTIDKFRRKNCPSCRLRKC). A DNA-binding region (nuclear receptor) is located at residues 551-623 (CLICGDEASG…AGMTLGARKL (73 aa)). The segment at 563 to 653 (YGALTCGSCK…TEETTQKLTV (91 aa)) is interaction with HIPK3. The interval 583-910 (QKYLCASRND…GKVKPIYFHT (328 aa)) is interaction with CCAR1. Residues 616–910 (MTLGARKLKK…GKVKPIYFHT (295 aa)) form an interaction with KAT7 region. A Phosphoserine; by STK4/MST1 modification is found at S642. Residues 660-891 (ECQPIFLNVL…DFPEMMAEII (232 aa)) form the NR LBD domain. Residues N697 and R744 each contribute to the 17beta-hydroxy-5alpha-androstan-3-one site. Residues K837 and K839 each participate in a glycyl lysine isopeptide (Lys-Gly) (interchain with G-Cter in ubiquitin) cross-link. T869 is a binding site for 17beta-hydroxy-5alpha-androstan-3-one. Phosphotyrosine; by CSK is present on Y907.

It belongs to the nuclear hormone receptor family. NR3 subfamily. As to quaternary structure, binds DNA as a homodimer. Part of a ternary complex containing AR, EFCAB6/DJBP and PARK7. Interacts with HIPK3 and NR0B2 in the presence of androgen. The ligand binding domain interacts with KAT7/HBO1 in the presence of dihydrotestosterone. Interacts with EFCAB6/DJBP, PQBP1, RANBP9, RBAK, SPDEF, SRA1, TGFB1I1 and RREB1. Interacts with ZMIZ1/ZIMP10 and ZMIZ2/ZMIP7 which both enhance its transactivation activity. Interacts with SLC30A9 and RAD54L2/ARIP4. Interacts with MACROD1 (via macro domain). Interacts via the ligand-binding domain with LXXLL and FXXLF motifs from NCOA1, NCOA2, NCOA3 and MAGEA11. Interacts (via nuclear receptor DNA binding domain and nuclear receptor ligand binding domain) with NCOA4. The AR N-terminal poly-Gln region binds Ran resulting in enhancement of AR-mediated transactivation. Ran-binding decreases as the poly-Gln length increases. Interacts with HIP1 (via coiled coil domain). Interacts (via ligand-binding domain) with TRIM68. Interacts with TNK2. Interacts with USP26. Interacts with RNF6. Interacts (regulated by RNF6 probably through polyubiquitination) with RNF14; regulates AR transcriptional activity. Interacts with PRMT2 and TRIM24. Interacts with RACK1. Interacts with RANBP10; this interaction enhances dihydrotestosterone-induced AR transcriptional activity. Interacts with PRPF6 in a hormone-independent way; this interaction enhances dihydrotestosterone-induced AR transcriptional activity. Interacts with STK4/MST1. Interacts with ZIPK/DAPK3. Interacts with LPXN. Interacts with MAK. Part of a complex containing AR, MAK and NCOA3. Interacts with CRY1. Interacts with CCAR1 and GATA2. Interacts with ZNF318. Interacts with BUD31. Interacts with ARID4A. Interacts with ARID4B. Interacts (via NR LBD domain) with ZBTB7A; the interaction is direct and androgen-dependent. Interacts with NCOR1. Interacts with NCOR2. Interacts with CRY2 in a ligand-dependent manner. Phosphorylated in prostate cancer cells in response to several growth factors including EGF. Phosphorylation is induced by c-Src kinase (CSK). Tyr-526 is one of the major phosphorylation sites and an increase in phosphorylation and Src kinase activity is associated with prostate cancer progression. Phosphorylation by TNK2 enhances the DNA-binding and transcriptional activity. Phosphorylation at Ser-81 by CDK9 regulates AR promoter selectivity and cell growth. In terms of processing, sumoylated on Lys-385 (major) and Lys-512. Ubiquitinated. Deubiquitinated by USP26. 'Lys-6' and 'Lys-27'-linked polyubiquitination by RNF6 modulates AR transcriptional activity and specificity. Post-translationally, palmitoylated by ZDHHC7 and ZDHHC21. Palmitoylation is required for plasma membrane targeting and for rapid intracellular signaling via ERK and AKT kinases and cAMP generation.

It localises to the nucleus. The protein localises to the cytoplasm. Steroid hormone receptors are ligand-activated transcription factors that regulate eukaryotic gene expression and affect cellular proliferation and differentiation in target tissues. Transcription factor activity is modulated by bound coactivator and corepressor proteins like ZBTB7A that recruits NCOR1 and NCOR2 to the androgen response elements/ARE on target genes, negatively regulating androgen receptor signaling and androgen-induced cell proliferation. Transcription activation is also down-regulated by NR0B2. Activated, but not phosphorylated, by HIPK3 and ZIPK/DAPK3. This is Androgen receptor (AR) from Pan troglodytes (Chimpanzee).